The primary structure comprises 463 residues: UDP-N-acetylmuramoylalanine--D-glutamate ligase (463 aa).

121-127 (GTNGKST) contacts ATP.

Belongs to the MurCDEF family.

Its subcellular location is the cytoplasm. The catalysed reaction is UDP-N-acetyl-alpha-D-muramoyl-L-alanine + D-glutamate + ATP = UDP-N-acetyl-alpha-D-muramoyl-L-alanyl-D-glutamate + ADP + phosphate + H(+). It functions in the pathway cell wall biogenesis; peptidoglycan biosynthesis. Functionally, cell wall formation. Catalyzes the addition of glutamate to the nucleotide precursor UDP-N-acetylmuramoyl-L-alanine (UMA). The polypeptide is UDP-N-acetylmuramoylalanine--D-glutamate ligase (murD) (Rhizobium meliloti (strain 1021) (Ensifer meliloti)).